The following is a 227-amino-acid chain: uncharacterized protein (227 aa).

5 consecutive transmembrane segments (helical) span residues 27–47, 63–83, 126–146, 153–173, and 186–206; these read AVLP…FPLL, PAPP…AVLG, TIIL…IAGV, VFLG…TLAG, and FQLI…VSAA.

The protein belongs to the DedA family.

The protein resides in the cell membrane. This is an uncharacterized protein from Mycobacterium tuberculosis (strain CDC 1551 / Oshkosh).